We begin with the raw amino-acid sequence, 143 residues long: Large ribosomal subunit protein uL15 (143 aa).

The segment at Met1 to Glu51 is disordered. Residues Arg21–Ala31 show a composition bias toward gly residues.

This sequence belongs to the universal ribosomal protein uL15 family. Part of the 50S ribosomal subunit.

In terms of biological role, binds to the 23S rRNA. This chain is Large ribosomal subunit protein uL15, found in Methylibium petroleiphilum (strain ATCC BAA-1232 / LMG 22953 / PM1).